The primary structure comprises 1036 residues: Serine/threonine-protein kinase ULK2 (1036 aa).

A Protein kinase domain is found at 9–271; that stretch reads YSKRDLVGHG…FEAFFSHPFL (263 aa). ATP-binding positions include 15 to 23 and Lys39; that span reads VGHGAFAVV. The Proton acceptor role is filled by Asp131. Disordered stretches follow at residues 319-348, 418-460, 491-522, 540-588, and 656-695; these read ENLSSPPLGPPNYLQVSKDSASTSSKNSSC, TSTA…ADTA, CCCGHPQGHDSRSRNSSGSPVPQAQSPQSLLS, QKLR…SSDW, and AEQQSKAVFGRSVSTGKLSDQQGKTPICRHQGSTDSLNTE. Residues 335–348 are compositionally biased toward low complexity; it reads SKDSASTSSKNSSC. The span at 418-428 shows a compositional bias: polar residues; sequence TSTASSGTNVH. Ser430 is subject to Phosphoserine. Residues 504-521 show a composition bias toward polar residues; it reads RNSSGSPVPQAQSPQSLL. The span at 659–679 shows a compositional bias: polar residues; the sequence is QSKAVFGRSVSTGKLSDQQGK. Ser771 and Ser780 each carry phosphoserine. A CTD-like region region spans residues 812-1036; sequence ELPEETLMER…SALCHSTATV (225 aa).

Belongs to the protein kinase superfamily. Ser/Thr protein kinase family. APG1/unc-51/ULK1 subfamily. Interacts with SYNGAP1. Component of a complex consisting of ATG13/KIAA0652, ULK1 and RB1CC1/FIP200. Interacts (via C-terminus) with ATG13/KIAA0652. Associates with the mammalian target of rapamycin complex 1 (mTORC1) through an interaction with RPTOR. In terms of processing, autophosphorylated. In response to nutrient limitation, probably phosphorylated and activated by AMPK, leading to activate autophagy.

It is found in the cytoplasmic vesicle membrane. It catalyses the reaction L-seryl-[protein] + ATP = O-phospho-L-seryl-[protein] + ADP + H(+). It carries out the reaction L-threonyl-[protein] + ATP = O-phospho-L-threonyl-[protein] + ADP + H(+). In terms of biological role, serine/threonine-protein kinase involved in autophagy in response to starvation. Acts upstream of phosphatidylinositol 3-kinase PIK3C3 to regulate the formation of autophagophores, the precursors of autophagosomes. Part of regulatory feedback loops in autophagy: acts both as a downstream effector and a negative regulator of mammalian target of rapamycin complex 1 (mTORC1) via interaction with RPTOR. Activated via phosphorylation by AMPK, also acts as a negative regulator of AMPK through phosphorylation of the AMPK subunits PRKAA1, PRKAB2 and PRKAG1. May phosphorylate ATG13/KIAA0652, FRS2, FRS3 and RPTOR; however such data need additional evidences. Not involved in ammonia-induced autophagy or in autophagic response of cerebellar granule neurons (CGN) to low potassium concentration. Plays a role early in neuronal differentiation and is required for granule cell axon formation: may govern axon formation via Ras-like GTPase signaling and through regulation of the Rab5-mediated endocytic pathways within developing axons. The chain is Serine/threonine-protein kinase ULK2 (ULK2) from Homo sapiens (Human).